The primary structure comprises 774 residues: MTKIYPLMPLRDIVIFPHMVAPLVVGREKSIRALEDAMEKKTEIFLVTQLEPTCEDPNEGEIYQCGTLSTVMQLLRLPDGTIKALVEGQRRARIVSRVPHEEFMQVEVEECTEVLPGQDELIAYERELRKAFQQFAHLGKKIGEEVVVSCSSIEDPVKLANVICSHLPLSSKEKQEVLEVETLGGRIELLLEILFRELQLAEVERKINIKVKQKLSRAQRDYYLGEKIREMQKEIGQGEDGVDEMTELENIIKAKKMPAYARARVQKELKKLRGMPAMSAETTVVRSYIDTILGLPWKKRSKGQLNVLKAEGILNKDHYGLEKPKERILEFLAVQSQVAKLKGPILCFVGPPGVGKTSICQSIAKSMGREFARLSLGGLRDEAEIRGHRRTYVGAMAGKVLRAMQKVGVANPVFCLDEIDKMSTDFRGDPAAALLEVLDPEQNSSFNDHYLDLDYDLSQVFFITTANSLEGIPIPLQDRMEIIQLSGYTEEDKQVIAEKYLLPKQLKANGFQKDDIFLSPGAMLTVVRHYTREAGVRGLERVLASLCRKVARDRLQKGKKSKKYRIGEKSVPTYLGTPKYRYGLAEERDEVGLATGLAWTQVGGVLLQIEVILMPGKGKLTLTGQLGDVMQESAQAAYSYIRSRAKELKLEPDFYEKVDIHVHVPEGAIPKDGPSAGITIATTLASALTGRPIRHELAMTGEITLRGRVLPIGGLTEKLLAAKRGNITKVLLPEENGRDLKDVPAKIKNALDIKLVSHMDQVLEQALLSKGKNK.

The Lon N-terminal domain occupies 5–198; that stretch reads YPLMPLRDIV…LLLEILFREL (194 aa). 350 to 357 serves as a coordination point for ATP; sequence GPPGVGKT. The Lon proteolytic domain occupies 588–769; it reads RDEVGLATGL…DQVLEQALLS (182 aa). Active-site residues include S675 and K718.

It belongs to the peptidase S16 family. In terms of assembly, homohexamer. Organized in a ring with a central cavity.

It localises to the cytoplasm. The catalysed reaction is Hydrolysis of proteins in presence of ATP.. ATP-dependent serine protease that mediates the selective degradation of mutant and abnormal proteins as well as certain short-lived regulatory proteins. Required for cellular homeostasis and for survival from DNA damage and developmental changes induced by stress. Degrades polypeptides processively to yield small peptide fragments that are 5 to 10 amino acids long. Binds to DNA in a double-stranded, site-specific manner. This chain is Lon protease 2, found in Desulfotalea psychrophila (strain LSv54 / DSM 12343).